A 527-amino-acid polypeptide reads, in one-letter code: Baicalin-beta-D-glucuronidase (527 aa).

An N-terminal signal peptide occupies residues 1-25 (MGFQVWQKGLCVLCFSLIFICGVIG). Glutamate 212 serves as the catalytic Proton donor. The Nucleophile role is filled by glutamate 329.

This sequence belongs to the glycosyl hydrolase 79 family. As to quaternary structure, homotetramer.

It carries out the reaction baicalin + H2O = baicalein + D-glucuronate + H(+). Functionally, beta-glucuronidase involved in the initiation of H(2)O(2) metabolism via the production of baicalein. Unable to use glycyrrhizin, gypsogenin-3-O-D-glucuronide, luteolin-7-O-D-glucoside and apigenin-7-O-D-glucoside as substrates. The polypeptide is Baicalin-beta-D-glucuronidase (SGUS) (Scutellaria baicalensis (Baical skullcap)).